A 128-amino-acid polypeptide reads, in one-letter code: uncharacterized protein (128 aa).

The region spanning 18–116 (CPVETTLDII…WGEKYKDRID (99 aa)) is the HTH hxlR-type domain.

This is an uncharacterized protein from Bacillus subtilis (strain 168).